A 581-amino-acid chain; its full sequence is Proline--tRNA ligase (581 aa).

The protein belongs to the class-II aminoacyl-tRNA synthetase family. ProS type 1 subfamily. Homodimer.

The protein localises to the cytoplasm. The enzyme catalyses tRNA(Pro) + L-proline + ATP = L-prolyl-tRNA(Pro) + AMP + diphosphate. Its function is as follows. Catalyzes the attachment of proline to tRNA(Pro) in a two-step reaction: proline is first activated by ATP to form Pro-AMP and then transferred to the acceptor end of tRNA(Pro). As ProRS can inadvertently accommodate and process non-cognate amino acids such as alanine and cysteine, to avoid such errors it has two additional distinct editing activities against alanine. One activity is designated as 'pretransfer' editing and involves the tRNA(Pro)-independent hydrolysis of activated Ala-AMP. The other activity is designated 'posttransfer' editing and involves deacylation of mischarged Ala-tRNA(Pro). The misacylated Cys-tRNA(Pro) is not edited by ProRS. The chain is Proline--tRNA ligase from Polaromonas naphthalenivorans (strain CJ2).